Consider the following 83-residue polypeptide: Small ribosomal subunit protein bS20 (83 aa).

Belongs to the bacterial ribosomal protein bS20 family.

Functionally, binds directly to 16S ribosomal RNA. The polypeptide is Small ribosomal subunit protein bS20 (Staphylococcus carnosus (strain TM300)).